Consider the following 198-residue polypeptide: Beta-crystallin A1 (198 aa).

The segment at 1–13 (MAQINPLPVPLGP) is N-terminal arm. Beta/gamma crystallin 'Greek key' domains follow at residues 14-53 (WKITVYDQENFQGKRMEFTSSCANIMECGFDNIRSLKVEC) and 54-100 (GGWI…RPIC). The segment at 101–106 (SANHKE) is connecting peptide. Beta/gamma crystallin 'Greek key' domains follow at residues 107 to 148 (SKLV…KVQC) and 149 to 197 (GSWV…RRIQ).

It belongs to the beta/gamma-crystallin family. Homo/heterodimer, or complexes of higher-order. The structure of beta-crystallin oligomers seems to be stabilized through interactions between the N-terminal arms.

Its function is as follows. Crystallins are the dominant structural components of the vertebrate eye lens. The polypeptide is Beta-crystallin A1 (Rana temporaria (European common frog)).